Reading from the N-terminus, the 188-residue chain is MASTNDLKNGLVLKLEGGQLWSVVEFQHVKPGKGPAFVRTKLKNVLSGKVVDKTFNAGVKVETATVDKRDMQFSYMDGDYFVFMDMETYDQLMIDRKVVGDAANFLVEGFEATVAQHEGEVLFVELPAAVELTIQETEPGVQGDRSTGGTKPATLETGHQINVPLFITTGEKIKVDTRTSDYLGRVNS.

This sequence belongs to the elongation factor P family.

The protein localises to the cytoplasm. Its pathway is protein biosynthesis; polypeptide chain elongation. Functionally, involved in peptide bond synthesis. Stimulates efficient translation and peptide-bond synthesis on native or reconstituted 70S ribosomes in vitro. Probably functions indirectly by altering the affinity of the ribosome for aminoacyl-tRNA, thus increasing their reactivity as acceptors for peptidyl transferase. The protein is Elongation factor P of Streptomyces coelicolor (strain ATCC BAA-471 / A3(2) / M145).